Consider the following 142-residue polypeptide: Large ribosomal subunit protein uL13 (142 aa).

It belongs to the universal ribosomal protein uL13 family. Part of the 50S ribosomal subunit.

Its function is as follows. This protein is one of the early assembly proteins of the 50S ribosomal subunit, although it is not seen to bind rRNA by itself. It is important during the early stages of 50S assembly. The sequence is that of Large ribosomal subunit protein uL13 from Lachnospira eligens (strain ATCC 27750 / DSM 3376 / VPI C15-48 / C15-B4) (Eubacterium eligens).